Consider the following 151-residue polypeptide: Ribonuclease H (151 aa).

An RNase H type-1 domain is found at 5–146 (ALPHVTIFTD…ADQLAREGVA (142 aa)). The Mg(2+) site is built by Asp-14, Glu-52, Asp-74, and Asp-138.

This sequence belongs to the RNase H family. In terms of assembly, monomer. Requires Mg(2+) as cofactor.

The protein localises to the cytoplasm. The enzyme catalyses Endonucleolytic cleavage to 5'-phosphomonoester.. In terms of biological role, endonuclease that specifically degrades the RNA of RNA-DNA hybrids. In Nitrobacter hamburgensis (strain DSM 10229 / NCIMB 13809 / X14), this protein is Ribonuclease H.